Here is a 578-residue protein sequence, read N- to C-terminus: MAEESRKPSAPSPPDQTPEEDLVIVKVEEDHGWDQESSLHENNPLGQEVFRLRFRQLCYQETLGPREALIQLRALCHQWLRPDLNTKEQILELLVLEQFLTILPEELQTLVKEHQLENGEEVVTLLEDLERQIDILGRPVSARVHGHRVLWEEVVHSASAPEPPNTQLQSEATQHKSPVPQESQERSMSTSQSPTRSQKGSSGDQEMTATLLTAGFQTLEKIEDMAVSLIREEWLLDPSQKDLSRDNRPEDFRNVFSLGGETRSENRELASKQVISTGIHPHGETAAKCNGDVIRGLEHEEARDLLGRLERQRGNPTQERRHKCDECGKSFAQSSGLVRHWRIHTGEKPYQCNVCGKAFSYRSALLSHQDIHNKVKRYHCKECGKAFSQNTGLILHQRIHTGEKPYQCNQCGKAFSQSAGLILHQRIHSGERPYECNECGKAFSHSSHLIGHQRIHTGEKPYECDECGKTFRRSSHLIGHQRSHTGEKPYKCNECGRAFSQKSGLIEHQRIHTGERPYKCKECGKAFNGNTGLIQHLRIHTGEKPYQCNECGKAFIQRSSLIRHQRIHSGEKSESISV.

Residues 1-20 form a disordered region; it reads MAEESRKPSAPSPPDQTPEE. Phosphoserine is present on S12. Residue K26 forms a Glycyl lysine isopeptide (Lys-Gly) (interchain with G-Cter in SUMO2) linkage. The 83-residue stretch at 51–133 folds into the SCAN box domain; sequence RLRFRQLCYQ…TLLEDLERQI (83 aa). The interval 158-205 is disordered; it reads ASAPEPPNTQLQSEATQHKSPVPQESQERSMSTSQSPTRSQKGSSGDQ. Residues 165–205 are compositionally biased toward polar residues; that stretch reads NTQLQSEATQHKSPVPQESQERSMSTSQSPTRSQKGSSGDQ. Glycyl lysine isopeptide (Lys-Gly) (interchain with G-Cter in SUMO2) cross-links involve residues K176 and K199. At S201 the chain carries Phosphoserine. The KRAB domain maps to 220-316; it reads EKIEDMAVSL…GRLERQRGNP (97 aa). Residues K221, K272, and K288 each participate in a glycyl lysine isopeptide (Lys-Gly) (interchain with G-Cter in SUMO2) cross-link. 2 consecutive C2H2-type zinc fingers follow at residues 322-344 and 350-372; these read HKCD…WRIH and YQCN…QDIH. Glycyl lysine isopeptide (Lys-Gly) (interchain with G-Cter in SUMO2) cross-links involve residues K374 and K376. 7 C2H2-type zinc fingers span residues 378–400, 406–428, 434–456, 462–484, 490–512, 518–540, and 546–568; these read YHCK…QRIH, YQCN…QRIH, YECN…QRIH, YECD…QRSH, YKCN…QRIH, and YKCK…LRIH. Glycyl lysine isopeptide (Lys-Gly) (interchain with G-Cter in SUMO2) cross-links involve residues K413 and K441. A Glycyl lysine isopeptide (Lys-Gly) (interchain with G-Cter in SUMO2) cross-link involves residue K502. A Glycyl lysine isopeptide (Lys-Gly) (interchain with G-Cter in SUMO2) cross-link involves residue K572.

This sequence belongs to the krueppel C2H2-type zinc-finger protein family.

The protein resides in the nucleus. Functionally, may be involved in transcriptional regulation. This is Zinc finger protein with KRAB and SCAN domains 8 (ZKSCAN8) from Pan paniscus (Pygmy chimpanzee).